Reading from the N-terminus, the 83-residue chain is Mu-theraphotoxin-Hhn2e (83 aa).

The N-terminal stretch at 1-21 (MKASMFLALAGLVLLFVVGYA) is a signal peptide. The propeptide occupies 22–48 (SESEEKEFPRELLSKIFAVDDFKGEER). Disulfide bonds link Cys-50–Cys-65, Cys-57–Cys-70, and Cys-64–Cys-77. Leu-81 is modified (leucine amide).

The protein belongs to the neurotoxin 10 (Hwtx-1) family. 15 (Hntx-3) subfamily. As to quaternary structure, monomer. Expressed by the venom gland.

The protein localises to the secreted. Functionally, lethal neurotoxin. Selectively blocks tetrodotoxin-sensitive voltage-gated sodium channels (Nav). Does not affect tetrodotoxin-resistant voltage-gated sodium channels or calcium channels. The chain is Mu-theraphotoxin-Hhn2e from Cyriopagopus hainanus (Chinese bird spider).